The chain runs to 481 residues: Deoxyribodipyrimidine photo-lyase (481 aa).

One can recognise a Photolyase/cryptochrome alpha/beta domain in the interval 1–136 (MQLFWHRRDL…AHAQFHDAVH (136 aa)). Position 228 (Y228) interacts with FAD. DNA is bound at residue R232. An FAD-binding site is contributed by 240-244 (TSRLS). Interaction with DNA regions lie at residues 283-290 (QLAWREFY) and 349-350 (NR). 380–382 (DHD) serves as a coordination point for FAD. A DNA-binding site is contributed by Q412.

This sequence belongs to the DNA photolyase class-1 family. Monomer. FAD serves as cofactor. The cofactor is coenzyme F420-(gamma-Glu)n.

The catalysed reaction is cyclobutadipyrimidine (in DNA) = 2 pyrimidine residues (in DNA).. Its function is as follows. Involved in repair of UV radiation-induced DNA damage. Catalyzes the light-dependent monomerization (300-600 nm) of cyclobutyl pyrimidine dimers (in cis-syn configuration), which are formed between adjacent bases on the same DNA strand upon exposure to ultraviolet radiation. The sequence is that of Deoxyribodipyrimidine photo-lyase (phr) from Halobacterium salinarum (strain ATCC 700922 / JCM 11081 / NRC-1) (Halobacterium halobium).